Reading from the N-terminus, the 380-residue chain is UDP-3-O-acylglucosamine N-acyltransferase (380 aa).

His-263 functions as the Proton acceptor in the catalytic mechanism.

Belongs to the transferase hexapeptide repeat family. LpxD subfamily. In terms of assembly, homotrimer.

It carries out the reaction a UDP-3-O-[(3R)-3-hydroxyacyl]-alpha-D-glucosamine + a (3R)-hydroxyacyl-[ACP] = a UDP-2-N,3-O-bis[(3R)-3-hydroxyacyl]-alpha-D-glucosamine + holo-[ACP] + H(+). Its pathway is bacterial outer membrane biogenesis; LPS lipid A biosynthesis. In terms of biological role, catalyzes the N-acylation of UDP-3-O-acylglucosamine using 3-hydroxyacyl-ACP as the acyl donor. Is involved in the biosynthesis of lipid A, a phosphorylated glycolipid that anchors the lipopolysaccharide to the outer membrane of the cell. The chain is UDP-3-O-acylglucosamine N-acyltransferase from Rhodopirellula baltica (strain DSM 10527 / NCIMB 13988 / SH1).